We begin with the raw amino-acid sequence, 623 residues long: NAD-dependent malic enzyme, mitochondrial (623 aa).

The N-terminal 31 residues, 1 to 31 (MLVLCSRSRLTSSLIRRLKDQIANVSNHRSF), are a transit peptide targeting the mitochondrion. 2 residues coordinate fumarate: R88 and R122. The Proton donor role is filled by S143. R196 contacts (S)-malate. NAD(+) is bound at residue R196. K214 acts as the Proton acceptor in catalysis. A divalent metal cation-binding residues include E285 and D286. Residue N289 participates in NAD(+) binding. D309 is an a divalent metal cation binding site. NAD(+) is bound at residue A345. Residues N464 and N509 each coordinate (S)-malate.

This sequence belongs to the malic enzymes family. As to quaternary structure, heterodimer of two related subunits. Mg(2+) serves as cofactor. It depends on Mn(2+) as a cofactor.

The protein resides in the mitochondrion matrix. It carries out the reaction (S)-malate + NAD(+) = pyruvate + CO2 + NADH. It participates in photosynthesis; C4 acid pathway. This chain is NAD-dependent malic enzyme, mitochondrial, found in Amaranthus hypochondriacus (Prince-of-Wales feather).